Consider the following 403-residue polypeptide: Arginine deiminase (403 aa).

Catalysis depends on cysteine 388, which acts as the Amidino-cysteine intermediate.

Belongs to the arginine deiminase family.

It localises to the cytoplasm. It carries out the reaction L-arginine + H2O = L-citrulline + NH4(+). Its pathway is amino-acid degradation; L-arginine degradation via ADI pathway; carbamoyl phosphate from L-arginine: step 1/2. The polypeptide is Arginine deiminase (Mycoplasma capricolum subsp. capricolum (strain California kid / ATCC 27343 / NCTC 10154)).